The chain runs to 71 residues: DNA gyrase inhibitor YacG (71 aa).

Zn(2+)-binding residues include cysteine 7, cysteine 10, cysteine 26, and cysteine 30.

The protein belongs to the DNA gyrase inhibitor YacG family. Interacts with GyrB. It depends on Zn(2+) as a cofactor.

Inhibits all the catalytic activities of DNA gyrase by preventing its interaction with DNA. Acts by binding directly to the C-terminal domain of GyrB, which probably disrupts DNA binding by the gyrase. The protein is DNA gyrase inhibitor YacG of Shewanella amazonensis (strain ATCC BAA-1098 / SB2B).